The following is a 52-amino-acid chain: Insulin (52 aa).

Intrachain disulfides connect Cys7-Cys38, Cys19-Cys51, and Cys37-Cys42.

This sequence belongs to the insulin family. As to quaternary structure, heterodimer of a B chain and an A chain linked by two disulfide bonds.

The protein resides in the secreted. Insulin decreases blood glucose concentration. It increases cell permeability to monosaccharides, amino acids and fatty acids. It accelerates glycolysis, the pentose phosphate cycle, and glycogen synthesis in liver. This Atractosteus spatula (Alligator gar) protein is Insulin (ins).